The chain runs to 42 residues: uncharacterized protein (42 aa).

Residues 1-42 are disordered; the sequence is MTTGKPQSFEKMRTPFPGRSKAKGPQSDIIPSAPPNTPVTEH. Pro residues predominate over residues 32–42; that stretch reads SAPPNTPVTEH.

This is an uncharacterized protein from Schizosaccharomyces pombe (strain 972 / ATCC 24843) (Fission yeast).